The chain runs to 142 residues: Transcription antitermination protein NusB (142 aa).

This sequence belongs to the NusB family. As to quaternary structure, monomer or homodimer; in equilibrium, with a preference for the monomer. Dimerization may be employed to package NusB in an inactive form until recruitment into antitermination complexes.

Functionally, involved in transcription antitermination. Required for transcription of ribosomal RNA (rRNA) genes. Binds specifically to the boxA antiterminator sequence of the ribosomal RNA (rrn) operons. The sequence is that of Transcription antitermination protein NusB from Thermotoga maritima (strain ATCC 43589 / DSM 3109 / JCM 10099 / NBRC 100826 / MSB8).